The chain runs to 143 residues: Putative complexin-1 (143 aa).

The tract at residues 16–72 (EVTGGLGMKDDGGEKTETGEDPEVIAARLEQEERRKEKHRKMENEREKMRQGIRDKY) is disordered. 2 stretches are compositionally biased toward basic and acidic residues: residues 23–33 (MKDDGGEKTET) and 44–72 (LEQE…RDKY). Positions 40–71 (IAARLEQEERRKEKHRKMENEREKMRQGIRDK) form a coiled coil.

Belongs to the complexin/synaphin family.

It is found in the cytoplasm. Its subcellular location is the cytosol. In terms of biological role, positively regulates a late step in synaptic vesicle exocytosis. The protein is Putative complexin-1 (cpx-1) of Caenorhabditis elegans.